We begin with the raw amino-acid sequence, 217 residues long: 3,4-dihydroxy-2-butanone 4-phosphate synthase (217 aa).

Residues 37 to 38, aspartate 42, 150 to 154, and glutamate 174 each bind D-ribulose 5-phosphate; these read RE and RGGHT. Mg(2+) is bound at residue glutamate 38. Histidine 153 provides a ligand contact to Mg(2+).

Belongs to the DHBP synthase family. In terms of assembly, homodimer. Mg(2+) serves as cofactor. It depends on Mn(2+) as a cofactor.

The enzyme catalyses D-ribulose 5-phosphate = (2S)-2-hydroxy-3-oxobutyl phosphate + formate + H(+). Its pathway is cofactor biosynthesis; riboflavin biosynthesis; 2-hydroxy-3-oxobutyl phosphate from D-ribulose 5-phosphate: step 1/1. Functionally, catalyzes the conversion of D-ribulose 5-phosphate to formate and 3,4-dihydroxy-2-butanone 4-phosphate. In Sodalis glossinidius (strain morsitans), this protein is 3,4-dihydroxy-2-butanone 4-phosphate synthase.